A 732-amino-acid chain; its full sequence is Bromodomain-containing factor 1 (732 aa).

Positions 1–22 are enriched in polar residues; the sequence is MSETFPETNTPVQTPSTESFVN. Disordered regions lie at residues 1–207, 324–380, 491–517, 556–600, and 700–732; these read MSET…NLPE, TNVA…ETKP, NKPV…EDNV, REQQ…TPPQ, and VNGQ…SEEE. The span at 37–51 shows a compositional bias: low complexity; that stretch reads SQDSDSNQQSSHQEP. Residues 89–100 are compositionally biased toward polar residues; sequence ASQTGVIQTEVS. Positions 137–147 are enriched in acidic residues; the sequence is EAPEENPQEEV. In terms of domain architecture, Bromo 1 spans 206-315; sequence PENPIPQHQA…AQFEKLMVKV (110 aa). Over residues 327-338 the composition is skewed to polar residues; sequence AEATSVATSPTT. Positions 370-380 are enriched in basic and acidic residues; it reads KSKELPYETKP. The 110-residue stretch at 383 to 492 folds into the Bromo 2 domain; the sequence is KKVAAELRFC…AVFDKKWANK (110 aa). Positions 529–569 form a coiled coil; sequence AIQVMENQIIRMRKELDELKKEHLKKLREQQAARKKKKQQK. The span at 561 to 579 shows a compositional bias: basic residues; it reads ARKKKKQQKGKRRAPKAKH. Over residues 590 to 600 the composition is skewed to pro residues; it reads PPEPPKLTPPQ. The 80-residue stretch at 593–672 folds into the NET domain; sequence PPKLTPPQPV…GDKALKNSAG (80 aa). Positions 718-732 are enriched in acidic residues; that stretch reads ESSEDEASSESSEEE.

This sequence belongs to the BET family.

Its subcellular location is the nucleus. In terms of biological role, transcription factor involved in the expression of a broad class of genes including snRNAs. Required for sporulation and DNA-damage repair. Prevents the spreading of SIR silencing at telomeres and protects histone H4, but not H3, from deacetylation. The chain is Bromodomain-containing factor 1 (BDF1) from Candida albicans (strain SC5314 / ATCC MYA-2876) (Yeast).